The chain runs to 148 residues: Nucleoside diphosphate kinase B (148 aa).

ATP-binding residues include Lys9, Phe57, Arg85, Thr91, Arg102, and Asn112. His115 functions as the Pros-phosphohistidine intermediate in the catalytic mechanism.

The protein belongs to the NDK family. It depends on Mg(2+) as a cofactor.

It carries out the reaction a 2'-deoxyribonucleoside 5'-diphosphate + ATP = a 2'-deoxyribonucleoside 5'-triphosphate + ADP. The enzyme catalyses a ribonucleoside 5'-diphosphate + ATP = a ribonucleoside 5'-triphosphate + ADP. Functionally, major role in the synthesis of nucleoside triphosphates other than ATP. The ATP gamma phosphate is transferred to the NDP beta phosphate via a ping-pong mechanism, using a phosphorylated active-site intermediate. The sequence is that of Nucleoside diphosphate kinase B from Flaveria bidentis (Coastal plain yellowtops).